The primary structure comprises 306 residues: Pantothenate kinase (306 aa).

G90–S97 lines the ATP pocket.

Belongs to the prokaryotic pantothenate kinase family.

It localises to the cytoplasm. It carries out the reaction (R)-pantothenate + ATP = (R)-4'-phosphopantothenate + ADP + H(+). Its pathway is cofactor biosynthesis; coenzyme A biosynthesis; CoA from (R)-pantothenate: step 1/5. In Listeria monocytogenes serotype 4a (strain HCC23), this protein is Pantothenate kinase.